We begin with the raw amino-acid sequence, 165 residues long: SsrA-binding protein (165 aa).

Over residues 135-158 (QAHDKRQDMARRDAQREVTRELGR) the composition is skewed to basic and acidic residues. The segment at 135-165 (QAHDKRQDMARRDAQREVTRELGRRVKGMTN) is disordered.

This sequence belongs to the SmpB family.

It is found in the cytoplasm. Functionally, required for rescue of stalled ribosomes mediated by trans-translation. Binds to transfer-messenger RNA (tmRNA), required for stable association of tmRNA with ribosomes. tmRNA and SmpB together mimic tRNA shape, replacing the anticodon stem-loop with SmpB. tmRNA is encoded by the ssrA gene; the 2 termini fold to resemble tRNA(Ala) and it encodes a 'tag peptide', a short internal open reading frame. During trans-translation Ala-aminoacylated tmRNA acts like a tRNA, entering the A-site of stalled ribosomes, displacing the stalled mRNA. The ribosome then switches to translate the ORF on the tmRNA; the nascent peptide is terminated with the 'tag peptide' encoded by the tmRNA and targeted for degradation. The ribosome is freed to recommence translation, which seems to be the essential function of trans-translation. The polypeptide is SsrA-binding protein (Mycolicibacterium gilvum (strain PYR-GCK) (Mycobacterium gilvum (strain PYR-GCK))).